The primary structure comprises 534 residues: Peptide chain release factor 3 (534 aa).

Positions 9–278 (ARRRTFAIIS…FFVEHAPPPQ (270 aa)) constitute a tr-type G domain. Residues 18 to 25 (SHPDAGKT), 86 to 90 (DTPGH), and 140 to 143 (NKLD) contribute to the GTP site.

This sequence belongs to the TRAFAC class translation factor GTPase superfamily. Classic translation factor GTPase family. PrfC subfamily.

The protein resides in the cytoplasm. In terms of biological role, increases the formation of ribosomal termination complexes and stimulates activities of RF-1 and RF-2. It binds guanine nucleotides and has strong preference for UGA stop codons. It may interact directly with the ribosome. The stimulation of RF-1 and RF-2 is significantly reduced by GTP and GDP, but not by GMP. The sequence is that of Peptide chain release factor 3 from Xanthomonas euvesicatoria pv. vesicatoria (strain 85-10) (Xanthomonas campestris pv. vesicatoria).